Reading from the N-terminus, the 458-residue chain is uncharacterized protein (458 aa).

The TRAM domain maps to 5-65 (QAPVNKNDVV…KGYGFGRVLN (61 aa)). Positions 78, 84, 87, and 165 each coordinate [4Fe-4S] cluster. S-adenosyl-L-methionine is bound by residues Gln289, Tyr318, Glu339, and Asp387. Cys414 serves as the catalytic Nucleophile.

Belongs to the class I-like SAM-binding methyltransferase superfamily. RNA M5U methyltransferase family.

This is an uncharacterized protein from Halalkalibacterium halodurans (strain ATCC BAA-125 / DSM 18197 / FERM 7344 / JCM 9153 / C-125) (Bacillus halodurans).